Reading from the N-terminus, the 281-residue chain is 2-dehydro-3-deoxyphosphooctonate aldolase (281 aa).

It belongs to the KdsA family.

It is found in the cytoplasm. The enzyme catalyses D-arabinose 5-phosphate + phosphoenolpyruvate + H2O = 3-deoxy-alpha-D-manno-2-octulosonate-8-phosphate + phosphate. The protein operates within carbohydrate biosynthesis; 3-deoxy-D-manno-octulosonate biosynthesis; 3-deoxy-D-manno-octulosonate from D-ribulose 5-phosphate: step 2/3. It participates in bacterial outer membrane biogenesis; lipopolysaccharide biosynthesis. This chain is 2-dehydro-3-deoxyphosphooctonate aldolase, found in Pseudomonas savastanoi pv. phaseolicola (strain 1448A / Race 6) (Pseudomonas syringae pv. phaseolicola (strain 1448A / Race 6)).